Consider the following 230-residue polypeptide: Acyl-protein thioesterase 1 (230 aa).

Catalysis depends on charge relay system residues Ser-119, Asp-174, and His-208. The residue at position 224 (Lys-224) is an N6-acetyllysine.

The protein belongs to the AB hydrolase superfamily. AB hydrolase 2 family. Homodimer.

It localises to the cytoplasm. It is found in the cell membrane. The protein resides in the nucleus membrane. Its subcellular location is the endoplasmic reticulum. The enzyme catalyses S-hexadecanoyl-L-cysteinyl-[protein] + H2O = L-cysteinyl-[protein] + hexadecanoate + H(+). The catalysed reaction is 1-hexadecanoyl-sn-glycero-3-phosphocholine + H2O = sn-glycerol 3-phosphocholine + hexadecanoate + H(+). It carries out the reaction a 1-(9Z-octadecenoyl)-2-acyl-sn-glycero-3-phosphocholine + H2O = a 2-acyl-sn-glycero-3-phosphocholine + (9Z)-octadecenoate + H(+). Acts as an acyl-protein thioesterase. Hydrolyzes fatty acids from S-acylated cysteine residues in proteins such as trimeric G alpha proteins or HRAS. Acts as a palmitoyl thioesterase that catalyzes depalmitoylation of proteins, such as ADRB2, KCNMA1 and SQSTM1. Acts as a negative regulator of autophagy by mediating palmitoylation of SQSTM1, decreasing affinity between SQSTM1 and ATG8 proteins and recruitment of ubiquitinated cargo proteins to autophagosomes. Acts as a lysophospholipase and hydrolyzes lysophosphatidylcholine (lyso-PC). Also hydrolyzes lysophosphatidylethanolamine (lyso-PE), lysophosphatidylinositol (lyso-PI) and lysophosphatidylserine (lyso-PS). Has much higher thioesterase activity than lysophospholipase activity. Contributes to the production of lysophosphatidic acid (LPA) during blood coagulation by recognizing and cleaving plasma phospholipids to generate lysophospholipids which in turn act as substrates for ENPP2 to produce LPA. In Mus musculus (Mouse), this protein is Acyl-protein thioesterase 1 (Lypla1).